Here is a 581-residue protein sequence, read N- to C-terminus: Protein SPT2 homolog (581 aa).

Over residues 26 to 35 (YYSTKYSPPK) the composition is skewed to low complexity. 2 disordered regions span residues 26–50 (YYSTKYSPPKKQSKESKQLSSNIQK) and 145–495 (QEDK…EYDS). A coiled-coil region spans residues 36 to 76 (KQSKESKQLSSNIQKFLQKKEAEEAEKKRLERQKLNDLLAK). Over residues 162-181 (SGTKERVKAAITREREEAKG) the composition is skewed to basic and acidic residues. Polar residues-rich tracts occupy residues 182 to 197 (NTRQKSSTSTLPSSAT) and 204 to 213 (VARSYSTSKT). 2 stretches are compositionally biased toward basic and acidic residues: residues 218–236 (NAEKLEEERKKRQEEEQRR) and 256–312 (LAEK…KETP). Positions 276–307 (ERLLSAREKRELEERQRQQEQRAQRLKMRESE) form a coiled coil. The segment covering 352–376 (SSASSTSLSSSNSHSSASRSSVSSS) has biased composition (low complexity). Polar residues predominate over residues 447 to 461 (TRQTPSSDVQRSQGG). A compositionally biased stretch (acidic residues) spans 486–495 (DDDDEDEYDS).

The protein belongs to the SPT2 family.

The protein is Protein SPT2 homolog of Drosophila melanogaster (Fruit fly).